Consider the following 258-residue polypeptide: Tegument protein VP22 (258 aa).

The disordered stretch occupies residues 66-143 (VQPAARGRDR…RAPPGANAVA (78 aa)). A compositionally biased stretch (low complexity) spans 77–118 (AAAGTTVAAPAAAPARRSSSRASSRPPRAAADPPVLRPATRG). Residues 131-134 (PRPR) carry the Nuclear localization signal motif. Positions 204–216 (LDRMLKSAAIRIL) match the Nuclear export signal motif. Residues 234 to 258 (RAQRPAARGSTSGGESRLRGERARP) form a disordered region. Residues 249–258 (SRLRGERARP) show a composition bias toward basic and acidic residues.

This sequence belongs to the alphaherpesvirinae VP22 tegument protein family. Interacts with gE (via C-terminus); this interaction is necessary for the recruitment of VP22 to the Golgi and its packaging into virions. Interacts with gM (via C-terminus). Interacts with VP16; this interaction allows the formation of a tripartite complex composed of VP16, VP22 and UL41/VHS. Interacts with the capsid-binding protein UL16. Interacts with host CGAS. In terms of processing, highly phosphorylated in the host cell. Packaging is selective for underphosphorylated forms.

The protein localises to the virion tegument. Its subcellular location is the host cytoplasm. It localises to the host nucleus. It is found in the host Golgi apparatus. Functionally, tegument protein that plays different roles during the time course of infection. Participates in both the accumulation of viral mRNAs and viral protein translation at late time of infection. Modulates the RNase activity of the virion host shutoff protein UL41 probably to ensure necessary levels of key cellular mRNAs and proteins. Plays a role in microtubule reorganization that occurs after viral infection by stabilizing microtubule network. Plays a role in the inhibition of host innate immune system by targeting the CGAS enzymatic activity which is the principal cytosolic DNA sensor that detects invading viral DNA. Acts by mediating disruption of liquid-like droplets in which CGAS is activated, thereby preventing CGAS activity. The sequence is that of Tegument protein VP22 from Bovine herpesvirus 1.1 (strain Cooper) (BoHV-1).